Here is a 272-residue protein sequence, read N- to C-terminus: Phosphatidylglycerol--prolipoprotein diacylglyceryl transferase (272 aa).

7 consecutive transmembrane segments (helical) span residues 17–37 (LAIR…LGFG), 59–79 (MLFF…VLFY), 95–115 (WEGG…MWLF), 129–149 (FIAP…FING), 176–196 (SQLY…WLFA), 202–222 (MGAV…AAEF), and 237–257 (LSMG…MVVW). A 1,2-diacyl-sn-glycero-3-phospho-(1'-sn-glycerol) is bound at residue Arg-142.

This sequence belongs to the Lgt family.

The protein resides in the cell inner membrane. The catalysed reaction is L-cysteinyl-[prolipoprotein] + a 1,2-diacyl-sn-glycero-3-phospho-(1'-sn-glycerol) = an S-1,2-diacyl-sn-glyceryl-L-cysteinyl-[prolipoprotein] + sn-glycerol 1-phosphate + H(+). Its pathway is protein modification; lipoprotein biosynthesis (diacylglyceryl transfer). Its function is as follows. Catalyzes the transfer of the diacylglyceryl group from phosphatidylglycerol to the sulfhydryl group of the N-terminal cysteine of a prolipoprotein, the first step in the formation of mature lipoproteins. This is Phosphatidylglycerol--prolipoprotein diacylglyceryl transferase from Cupriavidus necator (strain ATCC 17699 / DSM 428 / KCTC 22496 / NCIMB 10442 / H16 / Stanier 337) (Ralstonia eutropha).